Reading from the N-terminus, the 324-residue chain is Beta-ketoacyl-[acyl-carrier-protein] synthase III (324 aa).

Residues Cys112 and His251 contribute to the active site. The ACP-binding stretch occupies residues 252–256 (QANLR). Residue Asn281 is part of the active site.

Belongs to the thiolase-like superfamily. FabH family. As to quaternary structure, homodimer.

It localises to the cytoplasm. It carries out the reaction malonyl-[ACP] + acetyl-CoA + H(+) = 3-oxobutanoyl-[ACP] + CO2 + CoA. It participates in lipid metabolism; fatty acid biosynthesis. Catalyzes the condensation reaction of fatty acid synthesis by the addition to an acyl acceptor of two carbons from malonyl-ACP. Catalyzes the first condensation reaction which initiates fatty acid synthesis and may therefore play a role in governing the total rate of fatty acid production. Possesses both acetoacetyl-ACP synthase and acetyl transacylase activities. Its substrate specificity determines the biosynthesis of branched-chain and/or straight-chain of fatty acids. The sequence is that of Beta-ketoacyl-[acyl-carrier-protein] synthase III from Clostridium perfringens (strain SM101 / Type A).